A 460-amino-acid polypeptide reads, in one-letter code: CCA-adding enzyme (460 aa).

ATP contacts are provided by S50 and R53. Residues S50 and R53 each coordinate CTP. Positions 62, 64, and 117 each coordinate Mg(2+). Residues H140, K159, and Y168 each coordinate ATP. CTP contacts are provided by H140, K159, and Y168.

This sequence belongs to the tRNA nucleotidyltransferase/poly(A) polymerase family. Archaeal CCA-adding enzyme subfamily. As to quaternary structure, homodimer. Requires Mg(2+) as cofactor.

It carries out the reaction a tRNA precursor + 2 CTP + ATP = a tRNA with a 3' CCA end + 3 diphosphate. The enzyme catalyses a tRNA with a 3' CCA end + 2 CTP + ATP = a tRNA with a 3' CCACCA end + 3 diphosphate. Catalyzes the addition and repair of the essential 3'-terminal CCA sequence in tRNAs without using a nucleic acid template. Adds these three nucleotides in the order of C, C, and A to the tRNA nucleotide-73, using CTP and ATP as substrates and producing inorganic pyrophosphate. tRNA 3'-terminal CCA addition is required both for tRNA processing and repair. Also involved in tRNA surveillance by mediating tandem CCA addition to generate a CCACCA at the 3' terminus of unstable tRNAs. While stable tRNAs receive only 3'-terminal CCA, unstable tRNAs are marked with CCACCA and rapidly degraded. In Methanoregula boonei (strain DSM 21154 / JCM 14090 / 6A8), this protein is CCA-adding enzyme.